Reading from the N-terminus, the 55-residue chain is MPQLNPNPWLFIMLMSWLTFSLIIQPKLLPFTPINPPSNKTPTTTKTSPWTWPWT.

The chain crosses the membrane as a helical span at residues 7 to 24 (NPWLFIMLMSWLTFSLII). Positions 35–55 (NPPSNKTPTTTKTSPWTWPWT) are disordered. The segment covering 37 to 55 (PSNKTPTTTKTSPWTWPWT) has biased composition (low complexity).

It belongs to the ATPase protein 8 family. In terms of assembly, F-type ATPases have 2 components, CF(1) - the catalytic core - and CF(0) - the membrane proton channel.

It localises to the mitochondrion membrane. Its function is as follows. Mitochondrial membrane ATP synthase (F(1)F(0) ATP synthase or Complex V) produces ATP from ADP in the presence of a proton gradient across the membrane which is generated by electron transport complexes of the respiratory chain. F-type ATPases consist of two structural domains, F(1) - containing the extramembraneous catalytic core and F(0) - containing the membrane proton channel, linked together by a central stalk and a peripheral stalk. During catalysis, ATP synthesis in the catalytic domain of F(1) is coupled via a rotary mechanism of the central stalk subunits to proton translocation. Part of the complex F(0) domain. Minor subunit located with subunit a in the membrane. In Corythaeola cristata (Great blue turaco), this protein is ATP synthase protein 8 (MT-ATP8).